A 734-amino-acid chain; its full sequence is Cullin-4 (734 aa).

The Cullin neddylation domain occupies aspartate 666–aspartate 728. Residue lysine 680 forms a Glycyl lysine isopeptide (Lys-Gly) (interchain with G-Cter in NEDD8) linkage.

The protein belongs to the cullin family. Component of the Clr4 methyltransferase complex (ClrC) composed of at least clr4, rik1, pcu4, rbx1, raf1 and raf2. The cullin pcu4, rik1, raf1, raf2 and the ring-box protein rbx1 are components of an E3 ubiquitin ligase, whose activity is essential for heterochromatin assembly. Neddylated; enhancing the ubiquitin-ligase activity.

It localises to the cytoplasm. The protein localises to the nucleus. The protein resides in the chromosome. The protein operates within protein modification; protein ubiquitination. Its function is as follows. Required, indirectly, for activation of ribonucleotide reductase through the degradation of the protein spd1, thereby supplying deoxyribonucleotides for DNA replication and repair. Also has a role as a scaffold for assembling ubiquitin ligases. Component of the Clr4 methyltransferase complex (ClrC) which contributes to the establishment of heterochromatin by specifically methylating histone H3 to form H3K9me. ClrC preferentially ubiquitylates H3K14 and ClrC-mediated H3 ubiquitination promotes clr4 methyltransferase activity for the methylation of H3K9. H3K9me represents a specific tag for epigenetic transcriptional repression by recruiting swi6/HP1 to methylated histones which leads to transcriptional silencing within centromeric heterochromatin, telomeric regions and at the silent mating-type loci. This Schizosaccharomyces pombe (strain 972 / ATCC 24843) (Fission yeast) protein is Cullin-4 (pcu4).